A 358-amino-acid polypeptide reads, in one-letter code: Heterogeneous nuclear ribonucleoprotein A2 homolog 2 (358 aa).

RRM domains are found at residues 9-92 and 100-179; these read RKLF…ESAK and KKLF…LSKQ. Disordered stretches follow at residues 182–217 and 333–358; these read QDVQ…FRGG and YGGG…RNRY. Residues 193–217 are compositionally biased toward gly residues; that stretch reads GNFGFGDSRGGGNFGSGPGGNFRGG. The tract at residues 309–352 is nuclear targeting sequence; sequence QQSSSYGPMKSGGNFGGNRSMGGPYGGGNYGPGNGSGASGGGGY.

It localises to the nucleus. Functionally, forms complexes (ribonucleosomes) with at least 20 other different hnRNP and heterogeneous nuclear RNA in the nucleus. The sequence is that of Heterogeneous nuclear ribonucleoprotein A2 homolog 2 from Xenopus laevis (African clawed frog).